Consider the following 319-residue polypeptide: Cobalamin biosynthesis protein CobD (319 aa).

3 helical membrane-spanning segments follow: residues 54 to 76 (VLLL…WLSY), 154 to 173 (GVTA…ALLY), and 301 to 318 (VLGF…IYAI).

Belongs to the CobD/CbiB family.

The protein resides in the cell membrane. It functions in the pathway cofactor biosynthesis; adenosylcobalamin biosynthesis. Converts cobyric acid to cobinamide by the addition of aminopropanol on the F carboxylic group. This is Cobalamin biosynthesis protein CobD from Halalkalibacterium halodurans (strain ATCC BAA-125 / DSM 18197 / FERM 7344 / JCM 9153 / C-125) (Bacillus halodurans).